The primary structure comprises 504 residues: Maturase K (504 aa).

Belongs to the intron maturase 2 family. MatK subfamily.

The protein resides in the plastid. It is found in the chloroplast. In terms of biological role, usually encoded in the trnK tRNA gene intron. Probably assists in splicing its own and other chloroplast group II introns. This chain is Maturase K, found in Taxus baccata (English yew).